Here is a 74-residue protein sequence, read N- to C-terminus: Cell division protein ZapB (74 aa).

Positions 2-74 (TLDLLEQLES…LVGKIEETES (73 aa)) form a coiled coil.

It belongs to the ZapB family. In terms of assembly, homodimer. The ends of the coiled-coil dimer bind to each other, forming polymers. Interacts with FtsZ.

Its subcellular location is the cytoplasm. Its function is as follows. Non-essential, abundant cell division factor that is required for proper Z-ring formation. It is recruited early to the divisome by direct interaction with FtsZ, stimulating Z-ring assembly and thereby promoting cell division earlier in the cell cycle. Its recruitment to the Z-ring requires functional FtsA or ZipA. The chain is Cell division protein ZapB from Psychromonas ingrahamii (strain DSM 17664 / CCUG 51855 / 37).